Reading from the N-terminus, the 598-residue chain is Acetylcholine receptor subunit alpha-type acr-5 (598 aa).

Positions 1–16 are cleaved as a signal peptide; sequence MLPNIILILLIRYCSC. The Extracellular segment spans residues 17 to 323; sequence GAGSRVYEKY…HLVIRRKPLY (307 aa). 6 N-linked (GlcNAc...) asparagine glycosylation sites follow: Asn-54, Asn-71, Asn-77, Asn-134, Asn-178, and Asn-252. Residues 324–344 traverse the membrane as a helical segment; the sequence is YMINLVVPTSIITIVAVTGFF. Residues 345–356 lie on the Cytoplasmic side of the membrane; it reads TPTSSSSERDEK. The helical transmembrane segment at 357 to 377 threads the bilayer; sequence LYLGINTLLTMSVMMLMVCNQ. Topologically, residues 378–391 are extracellular; it reads MPSTSTYVPLMSWY. A helical membrane pass occupies residues 392–412; the sequence is YIGIIMVIVVGTFLATGVLAI. At 413–563 the chain is on the cytoplasmic side; sequence HGQKHYNKPI…WEFLANVLDR (151 aa). The chain crosses the membrane as a helical span at residues 564–584; that stretch reads ILLTIFCGFTFAVFIILIGFD. At 585-598 the chain is on the extracellular side; that stretch reads SFFTFHTDSPPKTM.

The protein belongs to the ligand-gated ion channel (TC 1.A.9) family. Acetylcholine receptor (TC 1.A.9.1) subfamily.

It localises to the postsynaptic cell membrane. It is found in the cell membrane. Functionally, subunit of nicotinic acetylcholine receptor (nAChR). Involved in nAChR sensitivity to nicotine. Modulates locomotion towards the drug nicotine. The sequence is that of Acetylcholine receptor subunit alpha-type acr-5 from Caenorhabditis elegans.